The chain runs to 443 residues: ATP-dependent protease ATPase subunit HslU (443 aa).

ATP is bound by residues I18, 60–65 (GVGKTE), D256, E321, and R393.

This sequence belongs to the ClpX chaperone family. HslU subfamily. A double ring-shaped homohexamer of HslV is capped on each side by a ring-shaped HslU homohexamer. The assembly of the HslU/HslV complex is dependent on binding of ATP.

It is found in the cytoplasm. Its function is as follows. ATPase subunit of a proteasome-like degradation complex; this subunit has chaperone activity. The binding of ATP and its subsequent hydrolysis by HslU are essential for unfolding of protein substrates subsequently hydrolyzed by HslV. HslU recognizes the N-terminal part of its protein substrates and unfolds these before they are guided to HslV for hydrolysis. The polypeptide is ATP-dependent protease ATPase subunit HslU (Pectobacterium atrosepticum (strain SCRI 1043 / ATCC BAA-672) (Erwinia carotovora subsp. atroseptica)).